The primary structure comprises 438 residues: Adenosylhomocysteinase (438 aa).

The substrate site is built by Thr-61, Asp-137, and Glu-162. 163–165 provides a ligand contact to NAD(+); sequence TTT. 2 residues coordinate substrate: Lys-192 and Asp-196. NAD(+) is bound by residues Asn-197, 226-231, Glu-249, Asn-284, 305-307, and Asn-352; these read GYGDVG and IGH.

The protein belongs to the adenosylhomocysteinase family. NAD(+) serves as cofactor.

It is found in the cytoplasm. The catalysed reaction is S-adenosyl-L-homocysteine + H2O = L-homocysteine + adenosine. It functions in the pathway amino-acid biosynthesis; L-homocysteine biosynthesis; L-homocysteine from S-adenosyl-L-homocysteine: step 1/1. May play a key role in the regulation of the intracellular concentration of adenosylhomocysteine. The protein is Adenosylhomocysteinase of Flavobacterium psychrophilum (strain ATCC 49511 / DSM 21280 / CIP 103535 / JIP02/86).